A 299-amino-acid polypeptide reads, in one-letter code: ATP phosphoribosyltransferase (299 aa).

This sequence belongs to the ATP phosphoribosyltransferase family. Long subfamily. It depends on Mg(2+) as a cofactor.

It localises to the cytoplasm. It catalyses the reaction 1-(5-phospho-beta-D-ribosyl)-ATP + diphosphate = 5-phospho-alpha-D-ribose 1-diphosphate + ATP. The protein operates within amino-acid biosynthesis; L-histidine biosynthesis; L-histidine from 5-phospho-alpha-D-ribose 1-diphosphate: step 1/9. Feedback inhibited by histidine. Catalyzes the condensation of ATP and 5-phosphoribose 1-diphosphate to form N'-(5'-phosphoribosyl)-ATP (PR-ATP). Has a crucial role in the pathway because the rate of histidine biosynthesis seems to be controlled primarily by regulation of HisG enzymatic activity. The polypeptide is ATP phosphoribosyltransferase (Shewanella pealeana (strain ATCC 700345 / ANG-SQ1)).